Consider the following 387-residue polypeptide: Xylose isomerase (387 aa).

Residues H53 and D56 contribute to the active site. Mg(2+)-binding residues include E180, E216, H219, D244, D254, D256, and D286.

The protein belongs to the xylose isomerase family. Homotetramer. Mg(2+) is required as a cofactor.

It is found in the cytoplasm. The enzyme catalyses alpha-D-xylose = alpha-D-xylulofuranose. The polypeptide is Xylose isomerase (xylA) (Thermus caldophilus).